Here is a 278-residue protein sequence, read N- to C-terminus: tRNA pseudouridine synthase A (278 aa).

Asp52 (nucleophile) is an active-site residue. Tyr111 serves as a coordination point for substrate. A compositionally biased stretch (low complexity) spans 253 to 264 (AKAGPLEAAPLG). Residues 253 to 278 (AKAGPLEAAPLGEAPLKEATLKEDWR) form a disordered region. The span at 267–278 (PLKEATLKEDWR) shows a compositional bias: basic and acidic residues.

It belongs to the tRNA pseudouridine synthase TruA family. As to quaternary structure, homodimer.

The catalysed reaction is uridine(38/39/40) in tRNA = pseudouridine(38/39/40) in tRNA. Functionally, formation of pseudouridine at positions 38, 39 and 40 in the anticodon stem and loop of transfer RNAs. In Rhodospirillum rubrum (strain ATCC 11170 / ATH 1.1.1 / DSM 467 / LMG 4362 / NCIMB 8255 / S1), this protein is tRNA pseudouridine synthase A.